The sequence spans 409 residues: uncharacterized protein (409 aa).

The N-terminal stretch at 1-29 (MARSRCVHRVVHQAACIGVIGLSTSALTT) is a signal peptide. Residue Cys30 is the site of N-palmitoyl cysteine attachment. Cys30 is lipidated: S-diacylglycerol cysteine.

Belongs to the TP013X lipoprotein family.

It localises to the cell membrane. This is an uncharacterized protein from Treponema pallidum (strain Nichols).